The primary structure comprises 487 residues: Acetyl-coenzyme A carboxylase carboxyl transferase subunit beta, chloroplastic (487 aa).

The region spanning 223–487 is the CoA carboxyltransferase N-terminal domain; sequence LWIQCDNCYG…FFPLKKNEIK (265 aa). Positions 227, 230, 243, and 246 each coordinate Zn(2+). The segment at 227–246 adopts a C4-type zinc-finger fold; the sequence is CDNCYGLMYKKVKMNVCEQC.

This sequence belongs to the AccD/PCCB family. As to quaternary structure, acetyl-CoA carboxylase is a heterohexamer composed of biotin carboxyl carrier protein, biotin carboxylase and 2 subunits each of ACCase subunit alpha and ACCase plastid-coded subunit beta (accD). Zn(2+) serves as cofactor.

It is found in the plastid. Its subcellular location is the chloroplast stroma. It carries out the reaction N(6)-carboxybiotinyl-L-lysyl-[protein] + acetyl-CoA = N(6)-biotinyl-L-lysyl-[protein] + malonyl-CoA. It participates in lipid metabolism; malonyl-CoA biosynthesis; malonyl-CoA from acetyl-CoA: step 1/1. Component of the acetyl coenzyme A carboxylase (ACC) complex. Biotin carboxylase (BC) catalyzes the carboxylation of biotin on its carrier protein (BCCP) and then the CO(2) group is transferred by the transcarboxylase to acetyl-CoA to form malonyl-CoA. In Lepidium virginicum (Virginia pepperweed), this protein is Acetyl-coenzyme A carboxylase carboxyl transferase subunit beta, chloroplastic.